The sequence spans 187 residues: MNLQHHFLIAMPALQDPIFRRSVVYICEHNQDGAMGIIINKPLENLQIEGILEKLKITPEPRDSAIRLDKAVMLGGPLAEDRGFILHTPPSRFASSIRISDNTVITTSRDVLETLGTQQQPSDVLVALGYASWDKGQLEQELLDNAWLTAPADLNILFKTPIAERWREAAKLFGIDILTMPGVAGHA.

Belongs to the UPF0301 (AlgH) family.

This is UPF0301 protein YqgE from Salmonella paratyphi B (strain ATCC BAA-1250 / SPB7).